A 2009-amino-acid chain; its full sequence is Protein Daple (2009 aa).

The region spanning 11–131 is the Calponin-homology (CH) domain; that stretch reads LFLQSPLVTW…KVLLLVLGCA (121 aa). The segment at 221–251 is disordered; sequence QTQQPPSPGKFSSPDSTPSPTSSLSSEDKQH. Phosphoserine is present on residues Ser227 and Ser239. A compositionally biased stretch (low complexity) spans 232 to 245; it reads SSPDSTPSPTSSLS. Coiled-coil stretches lie at residues 247-425 and 456-1008; these read EDKQ…QKQS and ELNE…TQEG. The residue at position 486 (Ser486) is a Phosphoserine. The segment at 1002–1036 is disordered; that stretch reads LRQTQEGGDKAQNALKRPPGKVTSHQEKEAWEPSH. Positions 1025–1036 are enriched in basic and acidic residues; that stretch reads SHQEKEAWEPSH. Residues 1190-1384 are a coiled coil; it reads HRNLELEHKE…LEEKIMDQYK (195 aa). The segment covering 1410–1419 has biased composition (basic and acidic residues); that stretch reads KEGSRERLKS. Disordered stretches follow at residues 1410–1716 and 1757–1787; these read KEGS…GAKM and GMPS…HMPV. Positions 1430 to 1439 are enriched in low complexity; sequence PSDPASPSPS. Ser1435 is modified (phosphoserine). The span at 1440-1449 shows a compositional bias: polar residues; sequence QALRSQTENP. Low complexity-rich tracts occupy residues 1510–1524 and 1562–1581; these read TFST…SSST and NSLE…SLKG. Ser1592 carries the post-translational modification Phosphoserine. The GBA motif lies at 1652–1683; the sequence is HSASPSSEMVTLEEFLEESNRGGSPTHDTPSC. The segment covering 1681-1697 has biased composition (basic and acidic residues); sequence PSCRDDLLSDYFRKAHD. Over residues 1761 to 1783 the composition is skewed to polar residues; that stretch reads RQVQPPQSLSLGRPRQTTMTQNC. Phosphoserine is present on Ser1798. A disordered region spans residues 1808 to 2009; it reads SGPEACRPES…QTVWYEYGCV (202 aa). The segment covering 1866–1883 has biased composition (basic and acidic residues); that stretch reads RPLDTRRFSLAPPKEERL. Over residues 1898-1911 the composition is skewed to polar residues; that stretch reads GCSSGSNPQIQHFS. Residues 1943–1954 show a composition bias toward gly residues; that stretch reads TSEGDGGPGHGY. Residues 1981–1991 are compositionally biased toward polar residues; that stretch reads SQGSSSKSTPA. Positions 2006-2009 match the PDZ-binding motif; that stretch reads YGCV. Positions 2007–2009 are DVL1-binding; the sequence is GCV.

Belongs to the CCDC88 family. In terms of assembly, homooligomer. Interacts with DVL1 (via PDZ domain); dissociates following initiation of non-canonical Wnt signaling. Interacts (via C-terminus) with ligand-activated Wnt receptor FZD7; competes with DVL1 for binding to FZD7 and displaces DVL1 from ligand-activated FZD7. Interacts (via GBA motif) with guanine nucleotide-binding protein G(i) alpha subunits GNAI1, GNAI2 and GNAI3 (inactive GDP-bound form); interacts with higher affinity with GNAI1 and GNAI3 than with GNAI2 and interaction leads to G(i) alpha subunit activation. Does not interact with GNAO1.

It is found in the cytoplasm. The protein localises to the cell junction. In terms of biological role, required for activation of guanine nucleotide-binding proteins (G-proteins) during non-canonical Wnt signaling. Binds to ligand-activated Wnt receptor FZD7, displacing DVL1 from the FZD7 receptor and leading to inhibition of canonical Wnt signaling. Acts as a non-receptor guanine nucleotide exchange factor by also binding to guanine nucleotide-binding protein G(i) alpha (Gi-alpha) subunits, leading to their activation. Binding to Gi-alpha subunits displaces the beta and gamma subunits from the heterotrimeric G-protein complex, triggering non-canonical Wnt responses such as activation of RAC1 and PI3K-AKT signaling. Promotes apical constriction of cells via ARHGEF18. In Mus musculus (Mouse), this protein is Protein Daple (Ccdc88c).